A 712-amino-acid chain; its full sequence is Diacylglycerol kinase 2 (712 aa).

2 Phorbol-ester/DAG-type zinc fingers span residues 72 to 133 (HHQW…AKDC) and 145 to 208 (RHHW…GDAC). One can recognise a DAGKc domain in the interval 338–479 (PDARPLLVFI…RWSVKIVEES (142 aa)).

It belongs to the eukaryotic diacylglycerol kinase family. In terms of assembly, monomer. Expressed in rosette and cauline leaves, flowers, siliques and roots. Highly expressed in young leaves and at lower levels in older leaves. In young seedlings, expressed at the root-shoot junction zone and vascular bundles of the cotyledons. In older plants, expressed in root tip, central cylinder, root hair, leaf mesophyll cells and guard cells, sepals, filaments of the anthers, stigma, valves of young and early adult siliques and hilum of seeds.

Its subcellular location is the endoplasmic reticulum. The enzyme catalyses a 1,2-diacyl-sn-glycerol + ATP = a 1,2-diacyl-sn-glycero-3-phosphate + ADP + H(+). It carries out the reaction 1-octadecanoyl-2-(5Z,8Z,11Z,14Z-eicosatetraenoyl)-sn-glycerol + ATP = 1-octadecanoyl-2-(5Z,8Z,11Z,14Z-eicosatetraenoyl)-sn-glycero-3-phosphate + ADP + H(+). It catalyses the reaction 1,2-di-(9Z-octadecenoyl)-sn-glycerol + ATP = 1,2-di-(9Z-octadecenoyl)-sn-glycero-3-phosphate + ADP + H(+). Its function is as follows. Phosphorylates the second messenger diacylglycerol (DAG) to generate phosphatidic acid (PA), another important signaling molecule. PA is required for plant development and responses to abiotic stress and pathogen attack. May be involved in the accumulation of PA during cold stress. Involved in response to freezing stress by modulating the accumulation of PA. Exhibits high specificity for the unsaturated DAG analogs 1-stearoyl-2-arachidonoyl-sn-glycerol (1,2-SAG) and 1,2-dioleoyl-sn-glycerol (1,2-DOG). Exhibits high specificity for 1-palmitoyl, 2-oleoyl-sn-glycerol (1,2 POG), 1-stearoyl, 2-linoleoyl-sn-glycerol (1,2-SLG) and 1-oleoyl, 2-palmitoyl-sn-glycerol (1,2-OPG). Has almost no activity toward 1,2-dioctanoyl-sn-glycerol (1,2-DOCG), 1,2-dipalmitoyl-sn-glycerol (1,2-DPG), 1,2-dimyristoyl-sn-glycerol (1,2-DMG) and 1-oleoyl-2-acetyl-sn-glycerol (1,2-OAG). Functions together with DGK4 in male gametophyte development and biosynthesis of phosphatidylglycerol and phosphatidylinositol in the endoplasmic reticulum (ER). Involved in PA production for pollen grain growth, as well as leaf and root growth. The sequence is that of Diacylglycerol kinase 2 from Arabidopsis thaliana (Mouse-ear cress).